We begin with the raw amino-acid sequence, 676 residues long: Forkhead box protein biniou (676 aa).

5 disordered regions span residues 22–50 (YHDP…GHPY), 131–160 (AHSA…SSST), 203–232 (QEQA…SRIS), 249–312 (NYSS…PEKP), and 583–651 (IQHA…AYLP). A compositionally biased stretch (basic residues) spans 34 to 48 (PHAHSHPHQHTHTGH). Residues 133–160 (SAGSASPQSNSKTPTDLPQDLQYASSST) show a composition bias toward polar residues. Positions 203-220 (QEQAGQQQPQQLPAQQLQ) are enriched in low complexity. A compositionally biased stretch (polar residues) spans 257–273 (PAKSLNGSESSPPSQNH). The segment at residues 311-408 (KPALSYINMI…DEGSLRRRPR (98 aa)) is a DNA-binding region (fork-head). Residues 583 to 593 (IQHAQAQAQAQ) are compositionally biased toward low complexity. Over residues 594-611 (AHHHHHQHHASHPSHSHQ) the composition is skewed to basic residues. A compositionally biased stretch (low complexity) spans 612–625 (GHGSMHQNHGTSST). Positions 637 to 647 (GIDHSPIDRKP) are enriched in basic and acidic residues.

Binds to DNA. As to expression, in embryo, expressed in all types of visceral muscles and their progenitors (at protein level). In late stage 10 embryo, expressed in the caudal visceral mesoderm and trunk and hindgut visceral mesoderm progenitors.

The protein localises to the nucleus. Component of a regulatory network controlling visceral mesoderm development and midgut morphogenesis. Transcriptional regulator involved in the activation of a large number of genes in the visceral mesoderm including betaTub60D, dpp and Hand. Binds to and regulates a number of enhancers driving expression in the visceral mesoderm in a temporally and spatially restricted manner. Also to binds to enhancers cooperatively with activators, such as bap or HLH54F, to coregulate expression of shared target genes in the visceral mesoderm. Binds to the Ndg enhancer and drives expression of Ndg in the late visceral musculature. May be involved in the transcriptional regulation of wupA in the visceral mesoderm. Plays an indirect role in the later stages of salivary gland positioning. The sequence is that of Forkhead box protein biniou (bin) from Drosophila melanogaster (Fruit fly).